A 375-amino-acid chain; its full sequence is tRNA-specific 2-thiouridylase MnmA (375 aa).

ATP is bound by residues 12 to 19 (GMSGGVDS) and Met38. The interval 98 to 100 (NPD) is interaction with target base in tRNA. The Nucleophile role is filled by Cys103. The cysteines at positions 103 and 200 are disulfide-linked. ATP is bound at residue Gly127. The interval 150 to 152 (KDQ) is interaction with tRNA. Cys200 serves as the catalytic Cysteine persulfide intermediate. An interaction with tRNA region spans residues 312 to 313 (RY).

The protein belongs to the MnmA/TRMU family.

The protein resides in the cytoplasm. The catalysed reaction is S-sulfanyl-L-cysteinyl-[protein] + uridine(34) in tRNA + AH2 + ATP = 2-thiouridine(34) in tRNA + L-cysteinyl-[protein] + A + AMP + diphosphate + H(+). In terms of biological role, catalyzes the 2-thiolation of uridine at the wobble position (U34) of tRNA, leading to the formation of s(2)U34. The chain is tRNA-specific 2-thiouridylase MnmA from Levilactobacillus brevis (strain ATCC 367 / BCRC 12310 / CIP 105137 / JCM 1170 / LMG 11437 / NCIMB 947 / NCTC 947) (Lactobacillus brevis).